The chain runs to 191 residues: Abscisic acid receptor PYR1 (191 aa).

Residues 23–176 (YQLDPGSCSS…NLQKLATVAE (154 aa)) are START-like. Lys-59 contributes to the abscisate binding site. Residue Thr-78 is modified to Phosphothreonine; by CARK1. A Gate loop motif is present at residues 85 to 89 (SGLPA). Abscisate-binding positions include 89–94 (ANTSTE), 116–122 (RLTNYKS), and Glu-141. Positions 115–117 (HRL) match the Latch loop motif.

It belongs to the PYR/PYL/RCAR abscisic acid intracellular receptor family. In terms of assembly, homodimer. Binds ABA on one subunit only. Interacts with HAB1, AHG3, ABI1 and ABI2 when complexed to ABA, and possibly with other PP2Cs. Binds to CARs protein in an ABA-independent manner, both at the plasma membrane and in the nucleus. Interacts directly with CAR1 and CAR4. Interacts with CARK1 in the cytosol. Interacts with AIP1 in an abscisic acid-dependent manner. Interacts with FREE1 (via N-terminus). Interacts with the E3 ubiquitin-protein ligase RSL1 at the plasma membrane. Ubiquitynated and degraded by the proteasome upon binding to the E3 ubiquitin-protein ligase RSL1 at the plasma membrane. In terms of processing, phosphorylated by CARK1 especially in response to abscisic acid (ABA); this phosphorylation promotes its stability and inhibitory ability to ABI1.

The protein resides in the cytoplasm. The protein localises to the cytosol. Its subcellular location is the nucleus. It is found in the cell membrane. It localises to the vacuole. Receptor for abscisic acid (ABA) required for ABA-mediated responses such as stomatal closure and germination inhibition. Inhibits the activity of group-A protein phosphatases type 2C (PP2Cs) when activated by ABA. Can be activated by both (-)-ABA and (+)-ABA. Promotes drought tolerance. In Arabidopsis thaliana (Mouse-ear cress), this protein is Abscisic acid receptor PYR1.